The following is a 160-amino-acid chain: MIDYKKNLLFILVFISGFILFTVYSYTAEKMIYNETCTANWVIFNDQGRANLTIDFMYNKKNKTGTVALSGTWQQGNRESKSIRRNIEYTWIENYDTAHLTSKKVNKFEIMDQVDDDRLAQLIPDFYVFPEKSVSYNILKQGKHAFILSIGNRAIMHCAR.

A helical membrane pass occupies residues Leu-8 to Ala-28.

It localises to the membrane. This is an uncharacterized protein from Escherichia coli (strain K12).